A 55-amino-acid polypeptide reads, in one-letter code: uncharacterized protein (55 aa).

This is an uncharacterized protein from Dictyostelium discoideum (Social amoeba).